A 654-amino-acid chain; its full sequence is tRNA 5-methylaminomethyl-2-thiouridine biosynthesis bifunctional protein MnmC (654 aa).

Residues Met1–Val236 are tRNA (mnm(5)s(2)U34)-methyltransferase. Positions Ile262–Lys654 are FAD-dependent cmnm(5)s(2)U34 oxidoreductase.

It in the N-terminal section; belongs to the methyltransferase superfamily. tRNA (mnm(5)s(2)U34)-methyltransferase family. In the C-terminal section; belongs to the DAO family. Requires FAD as cofactor.

The protein localises to the cytoplasm. It catalyses the reaction 5-aminomethyl-2-thiouridine(34) in tRNA + S-adenosyl-L-methionine = 5-methylaminomethyl-2-thiouridine(34) in tRNA + S-adenosyl-L-homocysteine + H(+). Its function is as follows. Catalyzes the last two steps in the biosynthesis of 5-methylaminomethyl-2-thiouridine (mnm(5)s(2)U) at the wobble position (U34) in tRNA. Catalyzes the FAD-dependent demodification of cmnm(5)s(2)U34 to nm(5)s(2)U34, followed by the transfer of a methyl group from S-adenosyl-L-methionine to nm(5)s(2)U34, to form mnm(5)s(2)U34. The protein is tRNA 5-methylaminomethyl-2-thiouridine biosynthesis bifunctional protein MnmC of Pseudomonas putida (strain ATCC 700007 / DSM 6899 / JCM 31910 / BCRC 17059 / LMG 24140 / F1).